Here is a 284-residue protein sequence, read N- to C-terminus: Tegument protein UL23 (284 aa).

The protein belongs to the herpesviridae US22 family. Interacts with host NMI; this interaction inhibits NMI interaction with STAT1.

It localises to the virion tegument. Its subcellular location is the host cytoplasm. Functionally, plays a role in the inhibition of host innate immune response by disrupting the interaction between NMI and STAT1. In turn, NMI-mediated transcription of interferon-gamma stimulated genes is inhibited. The chain is Tegument protein UL23 (UL23) from Homo sapiens (Human).